A 378-amino-acid polypeptide reads, in one-letter code: Deoxyguanosinetriphosphate triphosphohydrolase-like protein (378 aa).

The 137-residue stretch at 62-198 (RLTHTIEVAQ…AAVADDVAYN (137 aa)) folds into the HD domain.

Belongs to the dGTPase family. Type 2 subfamily.

The protein is Deoxyguanosinetriphosphate triphosphohydrolase-like protein of Paracoccus denitrificans (strain Pd 1222).